We begin with the raw amino-acid sequence, 117 residues long: Conotoxin vil14a (117 aa).

Residues M1–S22 form the signal peptide. A propeptide spanning residues E23–R90 is cleaved from the precursor. Positions R53–V86 are disordered. Residues R62–E80 are compositionally biased toward basic and acidic residues. Cystine bridges form between C96–C116 and C100–C112.

Belongs to the conotoxin R superfamily. As to expression, expressed by the venom duct.

The protein localises to the secreted. This Conus villepinii (Villepin's cone) protein is Conotoxin vil14a.